The chain runs to 415 residues: Serine hydroxymethyltransferase 2 (415 aa).

(6S)-5,6,7,8-tetrahydrofolate-binding positions include L121 and 125-127 (GHL). N6-(pyridoxal phosphate)lysine is present on K229.

The protein belongs to the SHMT family. As to quaternary structure, homodimer. The cofactor is pyridoxal 5'-phosphate.

It is found in the cytoplasm. The catalysed reaction is (6R)-5,10-methylene-5,6,7,8-tetrahydrofolate + glycine + H2O = (6S)-5,6,7,8-tetrahydrofolate + L-serine. The protein operates within one-carbon metabolism; tetrahydrofolate interconversion. It participates in amino-acid biosynthesis; glycine biosynthesis; glycine from L-serine: step 1/1. In terms of biological role, catalyzes the reversible interconversion of serine and glycine with tetrahydrofolate (THF) serving as the one-carbon carrier. This reaction serves as the major source of one-carbon groups required for the biosynthesis of purines, thymidylate, methionine, and other important biomolecules. Also exhibits THF-independent aldolase activity toward beta-hydroxyamino acids, producing glycine and aldehydes, via a retro-aldol mechanism. In Bordetella bronchiseptica (strain ATCC BAA-588 / NCTC 13252 / RB50) (Alcaligenes bronchisepticus), this protein is Serine hydroxymethyltransferase 2.